A 143-amino-acid chain; its full sequence is Sirohydrochlorin cobaltochelatase (143 aa).

His9 serves as the catalytic Proton acceptor. A Co(2+)-binding site is contributed by His9. His9 lines the Ni(2+) pocket. Substrate contacts are provided by residues Glu45 and 70 to 75; that span reads LAHGIH. Co(2+) is bound at residue His75. Residue His75 participates in Ni(2+) binding.

It belongs to the CbiX family. CbiXS subfamily. In terms of assembly, homotetramer; dimer of dimers.

The enzyme catalyses Co-sirohydrochlorin + 2 H(+) = sirohydrochlorin + Co(2+). The catalysed reaction is Ni-sirohydrochlorin + 2 H(+) = sirohydrochlorin + Ni(2+). It functions in the pathway cofactor biosynthesis; adenosylcobalamin biosynthesis; cob(II)yrinate a,c-diamide from sirohydrochlorin (anaerobic route): step 1/10. Functionally, catalyzes the insertion of Co(2+) into sirohydrochlorin as part of the anaerobic pathway to cobalamin biosynthesis. Involved in the biosynthesis of the unique nickel-containing tetrapyrrole coenzyme F430, the prosthetic group of methyl-coenzyme M reductase (MCR), which plays a key role in methanogenesis and anaerobic methane oxidation. Catalyzes the insertion of Ni(2+) into sirohydrochlorin to yield Ni-sirohydrochlorin. This is Sirohydrochlorin cobaltochelatase from Methanocaldococcus jannaschii (strain ATCC 43067 / DSM 2661 / JAL-1 / JCM 10045 / NBRC 100440) (Methanococcus jannaschii).